The following is a 218-amino-acid chain: Adenylate kinase (218 aa).

Position 14 to 19 (14 to 19) interacts with ATP; it reads GAGKGT. The tract at residues 34-63 is NMP; it reads STGDMFRAAIKAGTELGKQAKALMDEGKLV. AMP contacts are provided by residues Thr-35, Arg-40, 61 to 63, 89 to 92, and Gln-96; these read KLV and GFPR. The segment at 126–163 is LID; it reads GRRVHQASGRSYHIVYNPPKVEGKDDVTGEDLIIRADD. ATP-binding positions include Arg-127 and 136 to 137; that span reads SY. Positions 160 and 171 each coordinate AMP. Lys-204 lines the ATP pocket.

It belongs to the adenylate kinase family. Monomer.

It localises to the cytoplasm. The catalysed reaction is AMP + ATP = 2 ADP. The protein operates within purine metabolism; AMP biosynthesis via salvage pathway; AMP from ADP: step 1/1. Its function is as follows. Catalyzes the reversible transfer of the terminal phosphate group between ATP and AMP. Plays an important role in cellular energy homeostasis and in adenine nucleotide metabolism. The sequence is that of Adenylate kinase from Mannheimia succiniciproducens (strain KCTC 0769BP / MBEL55E).